Consider the following 139-residue polypeptide: S-adenosylmethionine decarboxylase proenzyme (139 aa).

The active-site Schiff-base intermediate with substrate; via pyruvic acid is Ser63. The residue at position 63 (Ser63) is a Pyruvic acid (Ser); by autocatalysis. His68 acts as the Proton acceptor; for processing activity in catalysis. The active-site Proton donor; for catalytic activity is Cys83.

The protein belongs to the prokaryotic AdoMetDC family. Type 1 subfamily. As to quaternary structure, heterotetramer of two alpha and two beta chains arranged as a dimer of alpha/beta heterodimers. The cofactor is pyruvate. Is synthesized initially as an inactive proenzyme. Formation of the active enzyme involves a self-maturation process in which the active site pyruvoyl group is generated from an internal serine residue via an autocatalytic post-translational modification. Two non-identical subunits are generated from the proenzyme in this reaction, and the pyruvate is formed at the N-terminus of the alpha chain, which is derived from the carboxyl end of the proenzyme. The post-translation cleavage follows an unusual pathway, termed non-hydrolytic serinolysis, in which the side chain hydroxyl group of the serine supplies its oxygen atom to form the C-terminus of the beta chain, while the remainder of the serine residue undergoes an oxidative deamination to produce ammonia and the pyruvoyl group blocking the N-terminus of the alpha chain.

It catalyses the reaction S-adenosyl-L-methionine + H(+) = S-adenosyl 3-(methylsulfanyl)propylamine + CO2. It participates in amine and polyamine biosynthesis; S-adenosylmethioninamine biosynthesis; S-adenosylmethioninamine from S-adenosyl-L-methionine: step 1/1. In terms of biological role, catalyzes the decarboxylation of S-adenosylmethionine to S-adenosylmethioninamine (dcAdoMet), the propylamine donor required for the synthesis of the polyamines spermine and spermidine from the diamine putrescine. This is S-adenosylmethionine decarboxylase proenzyme from Pyrococcus horikoshii (strain ATCC 700860 / DSM 12428 / JCM 9974 / NBRC 100139 / OT-3).